Here is a 583-residue protein sequence, read N- to C-terminus: Peptidyl-prolyl cis-trans isomerase FKBP10 (583 aa).

Positions 1-27 are cleaved as a signal peptide; the sequence is MLRAGPPSHTLLRLPLLQLLLLLLVQA. PPIase FKBP-type domains follow at residues 63 to 151, 175 to 263, 287 to 375, and 400 to 487; these read GDFV…LDVW, SDFV…IDVH, GDFM…IDFH, and GDFV…VSRE. N-linked (GlcNAc...) asparagine glycosylation is found at N71, N183, and N295. 2 EF-hand domains span residues 498-533 and 543-578; these read WHED…QVSE and DPEK…DQDR. Positions 511, 513, 515, 517, 522, 556, 558, 560, 562, and 567 each coordinate Ca(2+). Residues 534-583 are disordered; that stretch reads GKGRLLPGQDPEKTIGDMFQNQDRNQDGKITAEELKLKSDEDQDRVHEEL. The segment covering 557–583 has biased composition (basic and acidic residues); that stretch reads RNQDGKITAEELKLKSDEDQDRVHEEL. The Prevents secretion from ER signature appears at 580 to 583; the sequence is HEEL.

In terms of processing, glycosylated and phosphorylated.

Its subcellular location is the endoplasmic reticulum lumen. It catalyses the reaction [protein]-peptidylproline (omega=180) = [protein]-peptidylproline (omega=0). With respect to regulation, inhibited by both FK506 and rapamycin, but not by cyclosporin A. In terms of biological role, PPIases accelerate the folding of proteins during protein synthesis. This is Peptidyl-prolyl cis-trans isomerase FKBP10 (FKBP10) from Bos taurus (Bovine).